The primary structure comprises 822 residues: Ribonucleoside-diphosphate reductase large subunit (822 aa).

Residues threonine 249, 264-265, glycine 295, 470-474, and 651-655 contribute to the substrate site; these read SC, NLCTE, and PTAAS. A disulfide bridge connects residues cysteine 265 and cysteine 487. Asparagine 470 serves as the catalytic Proton acceptor. Cysteine 472 functions as the Cysteine radical intermediate in the catalytic mechanism. Glutamate 474 serves as the catalytic Proton acceptor.

The protein belongs to the ribonucleoside diphosphate reductase large chain family. In terms of assembly, heterotetramer composed of a homodimer of the large subunit (R1) and a homodimer of the small subunit (R2). Larger multisubunit protein complex are also active, composed of (R1)n(R2)n.

The enzyme catalyses a 2'-deoxyribonucleoside 5'-diphosphate + [thioredoxin]-disulfide + H2O = a ribonucleoside 5'-diphosphate + [thioredoxin]-dithiol. In terms of biological role, ribonucleoside-diphosphate reductase holoenzyme provides the precursors necessary for viral DNA synthesis. Allows virus growth in non-dividing cells, as well as reactivation from latency in infected hosts. Catalyzes the biosynthesis of deoxyribonucleotides from the corresponding ribonucleotides. In Gallus gallus (Chicken), this protein is Ribonucleoside-diphosphate reductase large subunit.